A 464-amino-acid polypeptide reads, in one-letter code: 3-isopropylmalate dehydratase large subunit (464 aa).

Positions 337, 397, and 400 each coordinate [4Fe-4S] cluster.

It belongs to the aconitase/IPM isomerase family. LeuC type 1 subfamily. In terms of assembly, heterodimer of LeuC and LeuD. The cofactor is [4Fe-4S] cluster.

It catalyses the reaction (2R,3S)-3-isopropylmalate = (2S)-2-isopropylmalate. It functions in the pathway amino-acid biosynthesis; L-leucine biosynthesis; L-leucine from 3-methyl-2-oxobutanoate: step 2/4. Functionally, catalyzes the isomerization between 2-isopropylmalate and 3-isopropylmalate, via the formation of 2-isopropylmaleate. The polypeptide is 3-isopropylmalate dehydratase large subunit (Bacillus thuringiensis (strain Al Hakam)).